Reading from the N-terminus, the 158-residue chain is Transcription elongation factor GreA (158 aa).

Residues 53-73 adopt a coiled-coil conformation; it reads EQQGFIEGRIKEIEAKLSNAQ.

Belongs to the GreA/GreB family.

Its function is as follows. Necessary for efficient RNA polymerase transcription elongation past template-encoded arresting sites. The arresting sites in DNA have the property of trapping a certain fraction of elongating RNA polymerases that pass through, resulting in locked ternary complexes. Cleavage of the nascent transcript by cleavage factors such as GreA or GreB allows the resumption of elongation from the new 3'terminus. GreA releases sequences of 2 to 3 nucleotides. The chain is Transcription elongation factor GreA from Thioalkalivibrio sulfidiphilus (strain HL-EbGR7).